Here is a 532-residue protein sequence, read N- to C-terminus: 2,3-bisphosphoglycerate-independent phosphoglycerate mutase (532 aa).

Positions 15 and 65 each coordinate Mn(2+). S65 serves as the catalytic Phosphoserine intermediate. Residues H126, 156–157 (RD), R188, R194, 258–261 (RPDR), and K331 contribute to the substrate site. Mn(2+) is bound by residues D398, H402, D439, H440, and H457.

This sequence belongs to the BPG-independent phosphoglycerate mutase family. As to quaternary structure, monomer. Mn(2+) is required as a cofactor.

The catalysed reaction is (2R)-2-phosphoglycerate = (2R)-3-phosphoglycerate. The protein operates within carbohydrate degradation; glycolysis; pyruvate from D-glyceraldehyde 3-phosphate: step 3/5. Catalyzes the interconversion of 2-phosphoglycerate and 3-phosphoglycerate. The chain is 2,3-bisphosphoglycerate-independent phosphoglycerate mutase from Rippkaea orientalis (strain PCC 8801 / RF-1) (Cyanothece sp. (strain PCC 8801)).